The primary structure comprises 405 residues: uncharacterized protein (405 aa).

The next 13 membrane-spanning stretches (helical) occupy residues 19-39, 48-68, 85-105, 106-126, 129-149, 156-176, 178-198, 224-244, 252-272, 283-303, 309-329, 344-364, and 366-386; these read IVSIVMFNFASYLTIGLPLAV, MGFSAFWAGLIISLQYFATLL, IVVFGLCGCFLSGFGYLLADI, ASAWPMISLLLLGLGRVILGI, SFAGTGSTLWGVGVVGSLHIG, GIVTYGAMAMGAPLGVLCYAW, GLQGLALTVMGVALLAILLAL, GMALALASAGFGVIATFITLF, GAAFALTLFSVAFVGTRLLFP, VAMICFGVEIIGLLLVGTAAM, IGVLLTGMGFSLVFPALGVVA, TYTVFMDMSLGVTGPLAGLVM, and WAGVPVIYLAAAGLVAMALLL.

It belongs to the major facilitator superfamily. YhhS family.

The protein localises to the cell inner membrane. This is an uncharacterized protein from Salmonella paratyphi C (strain RKS4594).